We begin with the raw amino-acid sequence, 448 residues long: Antilisterial bacteriocin subtilosin biosynthesis protein AlbA (448 aa).

A Radical SAM core domain is found at 115–329 (FPMPLHATFE…EQHVIDEFKD (215 aa)). [4Fe-4S] cluster is bound by residues Cys129, Cys133, Cys136, Cys408, Cys414, and Cys417.

Requires [4Fe-4S] cluster as cofactor.

The protein localises to the cytoplasm. Its function is as follows. Catalyzes the formation of 3 thioether bonds during production of the sactipeptide subtilosin from SboA. In vitro the thioether bonds cannot be made in the absence of the SboA propeptide, suggesting this is the first reaction in subtilosin maturation. In vitro, in the absence of a second substrate, cleaves S-adenosyl-L-methionine into Met and 5'-dA. The polypeptide is Antilisterial bacteriocin subtilosin biosynthesis protein AlbA (albA) (Bacillus subtilis (strain 168)).